The primary structure comprises 293 residues: Delta(3,5)-Delta(2,4)-dienoyl-CoA isomerase, mitochondrial (293 aa).

Substrate contacts are provided by residues 84-88 and Gly-142; that span reads AGLNL.

It belongs to the enoyl-CoA hydratase/isomerase family.

Its subcellular location is the mitochondrion. The enzyme catalyses (3E,5Z)-octadienoyl-CoA = (2E,4E)-octadienoyl-CoA. The catalysed reaction is (3E,5Z,8Z,11Z,14Z)-eicosapentaenoyl-CoA = (2E,4E,8Z,11Z,14Z)-eicosapentaenoyl-CoA. It functions in the pathway lipid metabolism; fatty acid beta-oxidation. Its function is as follows. Isomerization of 3-trans,5-cis-dienoyl-CoA to 2-trans,4-trans-dienoyl-CoA. This Dictyostelium discoideum (Social amoeba) protein is Delta(3,5)-Delta(2,4)-dienoyl-CoA isomerase, mitochondrial (ech1).